The following is a 200-amino-acid chain: Pyridoxal 5'-phosphate synthase subunit PdxT (200 aa).

An L-glutamine-binding site is contributed by 52-54; the sequence is GES. The active-site Nucleophile is Cys84. L-glutamine is bound by residues Arg116 and 145 to 146; that span reads IR. Active-site charge relay system residues include His181 and Glu183.

It belongs to the glutaminase PdxT/SNO family. As to quaternary structure, in the presence of PdxS, forms a dodecamer of heterodimers. Only shows activity in the heterodimer.

It catalyses the reaction aldehydo-D-ribose 5-phosphate + D-glyceraldehyde 3-phosphate + L-glutamine = pyridoxal 5'-phosphate + L-glutamate + phosphate + 3 H2O + H(+). The enzyme catalyses L-glutamine + H2O = L-glutamate + NH4(+). It functions in the pathway cofactor biosynthesis; pyridoxal 5'-phosphate biosynthesis. Its function is as follows. Catalyzes the hydrolysis of glutamine to glutamate and ammonia as part of the biosynthesis of pyridoxal 5'-phosphate. The resulting ammonia molecule is channeled to the active site of PdxS. The polypeptide is Pyridoxal 5'-phosphate synthase subunit PdxT (Saccharolobus islandicus (strain Y.N.15.51 / Yellowstone #2) (Sulfolobus islandicus)).